The primary structure comprises 206 residues: Thymidylate kinase (206 aa).

Residue 11 to 18 (GIDGAGKT) coordinates ATP.

This sequence belongs to the thymidylate kinase family.

It carries out the reaction dTMP + ATP = dTDP + ADP. Its function is as follows. Phosphorylation of dTMP to form dTDP in both de novo and salvage pathways of dTTP synthesis. This chain is Thymidylate kinase, found in Burkholderia ambifaria (strain MC40-6).